A 186-amino-acid polypeptide reads, in one-letter code: Quinone reductase (186 aa).

FMN contacts are provided by residues 13–20 (SLRKESYN), 80–83 (EHNR), and S116.

Belongs to the SsuE family. Homotetramer. Dimer of dimers. The tetrameric configuration has a central role in chromate reductase activity. Requires FMN as cofactor.

It catalyses the reaction a quinone + NADH + H(+) = a quinol + NAD(+). It carries out the reaction a quinone + NADPH + H(+) = a quinol + NADP(+). The catalysed reaction is Cr(6+) + 2 NADH + O2 = Cr(3+) + superoxide + 2 NAD(+) + 2 H(+). The enzyme catalyses Cr(6+) + 2 NADPH + O2 = Cr(3+) + superoxide + 2 NADP(+) + 2 H(+). With respect to regulation, non-competitively inhibited by sulfate. Functionally, catalyzes the reduction of quinones. Acts by simultaneous two-electron transfer, avoiding formation of highly reactive semiquinone intermediates and producing quinols that promote tolerance of H(2)O(2). Quinone reduction is probably the primary biological role of ChrR. Can also reduce toxic chromate to insoluble and less toxic Cr(3+). Catalyzes the transfer of three electrons to Cr(6+) producing Cr(3+) and one electron to molecular oxygen. This reaction produces transiently a minimal amount of the toxic Cr(5+) species and reactive oxygen species (ROS). Chromate reduction protects the cell against chromate toxicity, but is likely a secondary activity. The chain is Quinone reductase (chrR) from Pseudomonas putida (Arthrobacter siderocapsulatus).